The following is a 347-amino-acid chain: Quinolinate synthase (347 aa).

Positions 47 and 68 each coordinate iminosuccinate. Cys-113 is a [4Fe-4S] cluster binding site. Iminosuccinate is bound by residues Tyr-139 to Asn-141 and Ser-156. Cys-200 provides a ligand contact to [4Fe-4S] cluster. Iminosuccinate-binding positions include His-226 to Glu-228 and Thr-243. Cys-297 is a binding site for [4Fe-4S] cluster.

This sequence belongs to the quinolinate synthase family. Type 1 subfamily. The cofactor is [4Fe-4S] cluster.

The protein localises to the cytoplasm. The catalysed reaction is iminosuccinate + dihydroxyacetone phosphate = quinolinate + phosphate + 2 H2O + H(+). It functions in the pathway cofactor biosynthesis; NAD(+) biosynthesis; quinolinate from iminoaspartate: step 1/1. Catalyzes the condensation of iminoaspartate with dihydroxyacetone phosphate to form quinolinate. This Escherichia fergusonii (strain ATCC 35469 / DSM 13698 / CCUG 18766 / IAM 14443 / JCM 21226 / LMG 7866 / NBRC 102419 / NCTC 12128 / CDC 0568-73) protein is Quinolinate synthase.